A 156-amino-acid chain; its full sequence is Protein-export protein SecB (156 aa).

Belongs to the SecB family. Homotetramer, a dimer of dimers. One homotetramer interacts with 1 SecA dimer.

Its subcellular location is the cytoplasm. One of the proteins required for the normal export of preproteins out of the cell cytoplasm. It is a molecular chaperone that binds to a subset of precursor proteins, maintaining them in a translocation-competent state. It also specifically binds to its receptor SecA. The polypeptide is Protein-export protein SecB (Yersinia enterocolitica serotype O:8 / biotype 1B (strain NCTC 13174 / 8081)).